Reading from the N-terminus, the 173-residue chain is ATP synthase subunit delta (173 aa).

This sequence belongs to the ATPase delta chain family. As to quaternary structure, F-type ATPases have 2 components, F(1) - the catalytic core - and F(0) - the membrane proton channel. F(1) has five subunits: alpha(3), beta(3), gamma(1), delta(1), epsilon(1). F(0) has three main subunits: a(1), b(2) and c(10-14). The alpha and beta chains form an alternating ring which encloses part of the gamma chain. F(1) is attached to F(0) by a central stalk formed by the gamma and epsilon chains, while a peripheral stalk is formed by the delta and b chains.

It localises to the cell inner membrane. Functionally, f(1)F(0) ATP synthase produces ATP from ADP in the presence of a proton or sodium gradient. F-type ATPases consist of two structural domains, F(1) containing the extramembraneous catalytic core and F(0) containing the membrane proton channel, linked together by a central stalk and a peripheral stalk. During catalysis, ATP synthesis in the catalytic domain of F(1) is coupled via a rotary mechanism of the central stalk subunits to proton translocation. Its function is as follows. This protein is part of the stalk that links CF(0) to CF(1). It either transmits conformational changes from CF(0) to CF(1) or is implicated in proton conduction. This Campylobacter jejuni subsp. jejuni serotype O:2 (strain ATCC 700819 / NCTC 11168) protein is ATP synthase subunit delta.